Reading from the N-terminus, the 557-residue chain is Eudesmanediol synthase (557 aa).

Residues Asp310 and Asp314 each contribute to the Mg(2+) site. Residues Asp310, Asp314, Arg450, and Asn453 each coordinate substrate. The DDXXD motif signature appears at 310–314 (DDTFD). Asn453 and Ser457 together coordinate Mg(2+).

It belongs to the terpene synthase family. As to quaternary structure, monomer. The cofactor is Mg(2+). Mn(2+) is required as a cofactor. In terms of tissue distribution, specifically expressed in roots.

The protein resides in the cytoplasm. The catalysed reaction is (2E,6E)-farnesyl diphosphate + 2 H2O = 7-epi-ent-eudesmane-5,11-diol + diphosphate. The protein operates within secondary metabolite biosynthesis; terpenoid biosynthesis. Component of the volatile terpenes biosynthesis pathways. Dihydroxylated sesquiterpenoid synthase that generates dually hydroxylated products directly from (E,E)-farnesyl diphosphate, primarily eudesmane-2,11-diol, along with two closely related structural isomers. The protein is Eudesmanediol synthase of Zea mays (Maize).